A 440-amino-acid polypeptide reads, in one-letter code: Phosphatidylcholine-sterol acyltransferase (440 aa).

Residues 1 to 24 (MGPPGSPWQWVTLLLGLLLPPAAP) form the signal peptide. An N-linked (GlcNAc...) (complex) asparagine glycan is attached at Asn-44. Cysteines 74 and 98 form a disulfide. A glycan (N-linked (GlcNAc...) (complex) asparagine) is linked at Asn-108. Ser-205 acts as the Nucleophile in catalysis. Residue Asn-296 is glycosylated (N-linked (GlcNAc...) (complex) asparagine). A disulfide bond links Cys-337 and Cys-380. Residues Asp-369 and His-401 each act as charge relay system in the active site. Asn-408 carries N-linked (GlcNAc...) (complex) asparagine glycosylation. A glycan (O-linked (GalNAc...) threonine) is linked at Thr-431. Residue Ser-433 is glycosylated (O-linked (GalNAc...) serine).

This sequence belongs to the AB hydrolase superfamily. Lipase family. In terms of processing, O- and N-glycosylated. O-glycosylation on Thr-431 and Ser-433 consists of sialylated galactose beta 1--&gt;3N-acetylgalactosamine structures. N-glycosylated sites contain sialylated triantennary and/or biantennary complex structures. As to expression, detected in blood plasma. Detected in cerebral spinal fluid (at protein level). Detected in liver. Expressed mainly in brain, liver and testes.

It is found in the secreted. It carries out the reaction a sterol + a 1,2-diacyl-sn-glycero-3-phosphocholine = a sterol ester + a 1-acyl-sn-glycero-3-phosphocholine. It catalyses the reaction a 1-O-alkyl-2-acetyl-sn-glycero-3-phosphocholine + H2O = a 1-O-alkyl-sn-glycero-3-phosphocholine + acetate + H(+). The enzyme catalyses a 1-hexadecanoyl-2-acyl-sn-glycero-3-phosphocholine + (24S)-hydroxycholesterol = (24S)-24-hydroxycholesterol ester + 1-hexadecanoyl-sn-glycero-3-phosphocholine. The catalysed reaction is (24S)-hydroxycholesterol + 1-hexadecanoyl-2-(9Z,12Z-octadecadienoyl)-sn-glycero-3-phosphocholine = (24S)-hydroxycholesterol 3-linoleoate + 1-hexadecanoyl-sn-glycero-3-phosphocholine. It carries out the reaction 1-hexadecanoyl-2-(5Z,8Z,11Z,14Z-eicosatetraenoyl)-sn-glycero-3-phosphocholine + cholesterol = cholesteryl (5Z,8Z,11Z,14Z)-eicosatetraenoate + 1-hexadecanoyl-sn-glycero-3-phosphocholine. It catalyses the reaction 1-hexadecanoyl-2-(9Z-octadecenoyl)-sn-glycero-3-phosphocholine + cholesterol = cholesteryl (9Z-octadecenoate) + 1-hexadecanoyl-sn-glycero-3-phosphocholine. The enzyme catalyses 1-hexadecanoyl-2-(8Z,11Z,14Z-eicosatrienoyl)-sn-glycero-3-phosphocholine + cholesterol = cholesteryl (8Z,11Z,14Z)-eicosatrienoate + 1-hexadecanoyl-sn-glycero-3-phosphocholine. The catalysed reaction is 1-hexadecanoyl-2-(5Z,8Z,11Z-eicosatrienoyl)-sn-glycero-3-phosphocholine + cholesterol = cholesteryl (5Z,8Z,11Z)-eicosatrienoate + 1-hexadecanoyl-sn-glycero-3-phosphocholine. It carries out the reaction 1-hexadecanoyl-2-(5Z,8Z,11Z,14Z,17Z-eicosapentaenoyl)-sn-glycero-3-phosphocholine + cholesterol = (5Z,8Z,11Z,14Z,17Z-eicosapentaenoyl)-cholesterol + 1-hexadecanoyl-sn-glycero-3-phosphocholine. It catalyses the reaction 1-hexadecanoyl-2-(9Z,12Z-octadecadienoyl)-sn-glycero-3-phosphocholine + cholesterol = cholesteryl (9Z,12Z)-octadecadienoate + 1-hexadecanoyl-sn-glycero-3-phosphocholine. The enzyme catalyses 1-hexadecanoyl-2-(6Z,9Z,12Z-octadecatrienoyl)-sn-glycero-3-phosphocholine + cholesterol = (6Z,9Z,12Z-octadecatrienoyl)-cholesterol + 1-hexadecanoyl-sn-glycero-3-phosphocholine. The catalysed reaction is 1-hexadecanoyl-2-(11Z,14Z,17Z-eicosatrienoyl)-sn-glycero-3-phosphocholine + cholesterol = (11Z,14Z,17Z-eicosatrienoyl)-cholesterol + 1-hexadecanoyl-sn-glycero-3-phosphocholine. It carries out the reaction 1-hexadecanoyl-2-(9Z,12Z,15Z-octadecatrienoyl)-sn-glycero-3-phosphocholine + cholesterol = (9Z,12Z,15Z-octadecatrienoyl)-cholesterol + 1-hexadecanoyl-sn-glycero-3-phosphocholine. It catalyses the reaction 1-hexadecanoyl-2-(9Z,12Z-octadecadienoyl)-sn-glycero-3-phosphocholine + H2O = (9Z,12Z)-octadecadienoate + 1-hexadecanoyl-sn-glycero-3-phosphocholine + H(+). The enzyme catalyses 1-hexadecanoyl-2-(5Z,8Z,11Z,14Z-eicosatetraenoyl)-sn-glycero-3-phosphocholine + H2O = 1-hexadecanoyl-sn-glycero-3-phosphocholine + (5Z,8Z,11Z,14Z)-eicosatetraenoate + H(+). The catalysed reaction is a 1-O-alkyl-2-acetyl-sn-glycero-3-phosphocholine + 1-hexadecanoyl-sn-glycero-3-phosphocholine = 1-hexadecanoyl-2-acetyl-sn-glycero-3-phosphocholine + a 1-O-alkyl-sn-glycero-3-phosphocholine. With respect to regulation, APOA1 is the most potent activator in plasma. Also activated by APOE, APOC1 and APOA4. Inhibited by haptoglobin and 5,5'-dithiobis-(2-nitrobenzoic acid) (DTNB). Functionally, central enzyme in the extracellular metabolism of plasma lipoproteins. Synthesized mainly in the liver and secreted into plasma where it converts cholesterol and phosphatidylcholines (lecithins) to cholesteryl esters and lysophosphatidylcholines on the surface of high and low density lipoproteins (HDLs and LDLs). The cholesterol ester is then transported back to the liver. Has a preference for plasma 16:0-18:2 or 18:O-18:2 phosphatidylcholines. Also produced in the brain by primary astrocytes, and esterifies free cholesterol on nascent APOE-containing lipoproteins secreted from glia and influences cerebral spinal fluid (CSF) APOE- and APOA1 levels. Together with APOE and the cholesterol transporter ABCA1, plays a key role in the maturation of glial-derived, nascent lipoproteins. Required for remodeling high-density lipoprotein particles into their spherical forms. Catalyzes the hydrolysis of 1-O-alkyl-2-acetyl-sn-glycero-3-phosphocholine (platelet-activating factor or PAF) to 1-O-alkyl-sn-glycero-3-phosphocholine (lyso-PAF). Also catalyzes the transfer of the acetate group from PAF to 1-hexadecanoyl-sn-glycero-3-phosphocholine forming lyso-PAF. Catalyzes the esterification of (24S)-hydroxycholesterol (24(S)OH-C), also known as cerebrosterol to produce 24(S)OH-C monoesters. In Homo sapiens (Human), this protein is Phosphatidylcholine-sterol acyltransferase (LCAT).